The sequence spans 120 residues: Cu-Zn superoxide dismutase-like protein OPG175 (120 aa).

A disulfide bridge connects residues Cys-52 and Cys-102.

The protein belongs to the Cu-Zn superoxide dismutase family.

Its subcellular location is the virion. The protein resides in the host cytoplasm. Superoxide dismutase-like protein with no enzymatic activity. In Vaccinia virus (strain Tashkent) (VACV), this protein is Cu-Zn superoxide dismutase-like protein OPG175 (OPG175).